We begin with the raw amino-acid sequence, 177 residues long: Adenylyl-sulfate kinase (177 aa).

12-19 (GLSGAGKT) is a binding site for ATP. Residue S86 is the Phosphoserine intermediate of the active site.

Belongs to the APS kinase family.

The catalysed reaction is adenosine 5'-phosphosulfate + ATP = 3'-phosphoadenylyl sulfate + ADP + H(+). It functions in the pathway sulfur metabolism; hydrogen sulfide biosynthesis; sulfite from sulfate: step 2/3. In terms of biological role, catalyzes the synthesis of activated sulfate. This is Adenylyl-sulfate kinase from Picosynechococcus sp. (strain ATCC 27264 / PCC 7002 / PR-6) (Agmenellum quadruplicatum).